The sequence spans 104 residues: Pyrimidine/purine nucleoside phosphorylase (104 aa).

Belongs to the nucleoside phosphorylase PpnP family.

It catalyses the reaction a purine D-ribonucleoside + phosphate = a purine nucleobase + alpha-D-ribose 1-phosphate. The catalysed reaction is adenosine + phosphate = alpha-D-ribose 1-phosphate + adenine. It carries out the reaction cytidine + phosphate = cytosine + alpha-D-ribose 1-phosphate. The enzyme catalyses guanosine + phosphate = alpha-D-ribose 1-phosphate + guanine. It catalyses the reaction inosine + phosphate = alpha-D-ribose 1-phosphate + hypoxanthine. The catalysed reaction is thymidine + phosphate = 2-deoxy-alpha-D-ribose 1-phosphate + thymine. It carries out the reaction uridine + phosphate = alpha-D-ribose 1-phosphate + uracil. The enzyme catalyses xanthosine + phosphate = alpha-D-ribose 1-phosphate + xanthine. Catalyzes the phosphorolysis of diverse nucleosides, yielding D-ribose 1-phosphate and the respective free bases. Can use uridine, adenosine, guanosine, cytidine, thymidine, inosine and xanthosine as substrates. Also catalyzes the reverse reactions. The protein is Pyrimidine/purine nucleoside phosphorylase of Leptospira borgpetersenii serovar Hardjo-bovis (strain L550).